A 464-amino-acid chain; its full sequence is Cerebellar degeneration-related protein 2-like (464 aa).

3 coiled-coil regions span residues 31 to 154 (AAEL…RRKT), 201 to 264 (VSSL…KSRV), and 342 to 379 (MSIL…AEVQ). The tract at residues 371–419 (ESLRHAEVQTSRPVSRDPSMKECRVAEPQQPPPTPPQTPSTPEALEGIS) is disordered. The span at 384–395 (VSRDPSMKECRV) shows a compositional bias: basic and acidic residues. Residues 399-409 (QQPPPTPPQTP) are compositionally biased toward pro residues.

The protein belongs to the CDR2 family.

The sequence is that of Cerebellar degeneration-related protein 2-like (cdr2l) from Danio rerio (Zebrafish).